Reading from the N-terminus, the 305-residue chain is tRNA dimethylallyltransferase (305 aa).

9–16 provides a ligand contact to ATP; the sequence is GPTASGKT. Substrate is bound at residue 11–16; the sequence is TASGKT. Interaction with substrate tRNA regions lie at residues 34–37, 158–162, and 239–244; these read DSAL, QRLSR, and RCVGYR.

It belongs to the IPP transferase family. Monomer. Mg(2+) is required as a cofactor.

It catalyses the reaction adenosine(37) in tRNA + dimethylallyl diphosphate = N(6)-dimethylallyladenosine(37) in tRNA + diphosphate. Functionally, catalyzes the transfer of a dimethylallyl group onto the adenine at position 37 in tRNAs that read codons beginning with uridine, leading to the formation of N6-(dimethylallyl)adenosine (i(6)A). The sequence is that of tRNA dimethylallyltransferase from Aeromonas hydrophila subsp. hydrophila (strain ATCC 7966 / DSM 30187 / BCRC 13018 / CCUG 14551 / JCM 1027 / KCTC 2358 / NCIMB 9240 / NCTC 8049).